The following is a 143-amino-acid chain: Large ribosomal subunit protein uL11 (143 aa).

Belongs to the universal ribosomal protein uL11 family. In terms of assembly, part of the ribosomal stalk of the 50S ribosomal subunit. Interacts with L10 and the large rRNA to form the base of the stalk. L10 forms an elongated spine to which L12 dimers bind in a sequential fashion forming a multimeric L10(L12)X complex. Post-translationally, one or more lysine residues are methylated.

Its function is as follows. Forms part of the ribosomal stalk which helps the ribosome interact with GTP-bound translation factors. This Zymomonas mobilis subsp. mobilis (strain ATCC 31821 / ZM4 / CP4) protein is Large ribosomal subunit protein uL11.